The following is a 71-amino-acid chain: MSKQEMLSFSGIVEDLLPNAMFRVKLENGHIVTAHAAGKLRKNRIRVLQGDKVQVEMTPYDLTKGRITFRG.

Residues 1-71 (MSKQEMLSFS…LTKGRITFRG (71 aa)) form the S1-like domain.

This sequence belongs to the IF-1 family. As to quaternary structure, component of the 30S ribosomal translation pre-initiation complex which assembles on the 30S ribosome in the order IF-2 and IF-3, IF-1 and N-formylmethionyl-tRNA(fMet); mRNA recruitment can occur at any time during PIC assembly.

Its subcellular location is the cytoplasm. Its function is as follows. One of the essential components for the initiation of protein synthesis. Stabilizes the binding of IF-2 and IF-3 on the 30S subunit to which N-formylmethionyl-tRNA(fMet) subsequently binds. Helps modulate mRNA selection, yielding the 30S pre-initiation complex (PIC). Upon addition of the 50S ribosomal subunit IF-1, IF-2 and IF-3 are released leaving the mature 70S translation initiation complex. The sequence is that of Translation initiation factor IF-1 from Pelagibacter ubique (strain HTCC1062).